Here is an 823-residue protein sequence, read N- to C-terminus: Endoplasmin homolog (823 aa).

Residues 1 to 23 form the signal peptide; that stretch reads MRKRTLVSVLFLFSLLFLLPDQG. The tract at residues 29–60 is disordered; it reads NAEESSDDVTDPPKVEEKIGGHGGLSTDSDVV. Residues 39–48 show a composition bias toward basic and acidic residues; it reads DPPKVEEKIG. Residues Glu106, Asn110, Asp154, Met159, Asn167, Lys173, 174 to 175, 194 to 199, Phe199, and Thr246 each bind ATP; these read SG and QFGVGF. A glycan (N-linked (GlcNAc...) asparagine) is linked at Asn110. A disordered region spans residues 289–328; the sequence is ETEVPVEEDESADEETETTSTEEEKEEDAEEEDGEKKQKT. The span at 290–321 shows a compositional bias: acidic residues; that stretch reads TEVPVEEDESADEETETTSTEEEKEEDAEEED. 2 N-linked (GlcNAc...) asparagine glycosylation sites follow: Asn452 and Asn620. Over residues 777–792 the composition is skewed to acidic residues; it reads VADEEIEAAEEPETSE. The segment at 777–823 is disordered; it reads VADEEIEAAEEPETSEATETKSDDLAGGLNIEAEPVEQQEENTKDEL. Positions 820 to 823 match the Prevents secretion from ER motif; the sequence is KDEL.

It belongs to the heat shock protein 90 family. In terms of assembly, interacts with FKBP42. Interacts with P23-1. In terms of tissue distribution, ubiquitous.

The protein localises to the endoplasmic reticulum lumen. In terms of biological role, may have a molecular chaperone role in the processing of secreted materials. Required for shoot apical meristem (SAM), root apical meristem (RAM) and floral meristem (FM) formation, probably by regulating the folding of CLAVATA proteins (CLVs). Also involved in pollen tube elongation. Involved in resistance to tunicamycin- or high calcium-induced ER stresses. Possesses ATPase activity. This Arabidopsis thaliana (Mouse-ear cress) protein is Endoplasmin homolog.